A 347-amino-acid polypeptide reads, in one-letter code: D-alanine--D-alanine ligase (347 aa).

In terms of domain architecture, ATP-grasp spans 133 to 342; it reads KQAFAQASLP…FPDLVHRLIQ (210 aa). 169 to 224 is an ATP binding site; that stretch reads ETELGYPCFVKPANLGSSVGIAKVRDRAELEAALDQAAALDRRLIIEAAIDNPREV. Positions 296, 309, and 311 each coordinate Mg(2+).

Belongs to the D-alanine--D-alanine ligase family. Mg(2+) is required as a cofactor. Requires Mn(2+) as cofactor.

It is found in the cytoplasm. It catalyses the reaction 2 D-alanine + ATP = D-alanyl-D-alanine + ADP + phosphate + H(+). The protein operates within cell wall biogenesis; peptidoglycan biosynthesis. In terms of biological role, cell wall formation. The sequence is that of D-alanine--D-alanine ligase from Synechococcus elongatus (strain ATCC 33912 / PCC 7942 / FACHB-805) (Anacystis nidulans R2).